The primary structure comprises 395 residues: Chaperone protein DnaJ 2 (395 aa).

The J domain occupies 10–75; the sequence is NYYADLGVSS…KKRKEYDELK (66 aa). The CR-type zinc-finger motif lies at 165–242; it reads GTTIPVELTG…CHGRGTVRKS (78 aa). Zn(2+)-binding residues include Cys178, Cys181, Cys194, Cys197, Cys216, Cys219, Cys230, and Cys233. CXXCXGXG motif repeat units lie at residues 178–185, 194–201, 216–223, and 230–237; these read CNTCHGSG, CGTCDGTG, CATCGGTG, and CDNCHGRG.

Belongs to the DnaJ family. Homodimer. The cofactor is Zn(2+).

It localises to the cytoplasm. Participates actively in the response to hyperosmotic and heat shock by preventing the aggregation of stress-denatured proteins and by disaggregating proteins, also in an autonomous, DnaK-independent fashion. Unfolded proteins bind initially to DnaJ; upon interaction with the DnaJ-bound protein, DnaK hydrolyzes its bound ATP, resulting in the formation of a stable complex. GrpE releases ADP from DnaK; ATP binding to DnaK triggers the release of the substrate protein, thus completing the reaction cycle. Several rounds of ATP-dependent interactions between DnaJ, DnaK and GrpE are required for fully efficient folding. Also involved, together with DnaK and GrpE, in the DNA replication of plasmids through activation of initiation proteins. The sequence is that of Chaperone protein DnaJ 2 from Corynebacterium glutamicum (strain ATCC 13032 / DSM 20300 / JCM 1318 / BCRC 11384 / CCUG 27702 / LMG 3730 / NBRC 12168 / NCIMB 10025 / NRRL B-2784 / 534).